The chain runs to 328 residues: Beta-ketoacyl-[acyl-carrier-protein] synthase III (328 aa).

Residues cysteine 122 and histidine 255 contribute to the active site. An ACP-binding region spans residues 256–260 (QANVR). Residue asparagine 285 is part of the active site.

The protein belongs to the thiolase-like superfamily. FabH family. In terms of assembly, homodimer.

The protein resides in the cytoplasm. It carries out the reaction malonyl-[ACP] + acetyl-CoA + H(+) = 3-oxobutanoyl-[ACP] + CO2 + CoA. The protein operates within lipid metabolism; fatty acid biosynthesis. In terms of biological role, catalyzes the condensation reaction of fatty acid synthesis by the addition to an acyl acceptor of two carbons from malonyl-ACP. Catalyzes the first condensation reaction which initiates fatty acid synthesis and may therefore play a role in governing the total rate of fatty acid production. Possesses both acetoacetyl-ACP synthase and acetyl transacylase activities. Its substrate specificity determines the biosynthesis of branched-chain and/or straight-chain of fatty acids. In Bordetella avium (strain 197N), this protein is Beta-ketoacyl-[acyl-carrier-protein] synthase III.